A 271-amino-acid polypeptide reads, in one-letter code: Nuclear egress protein 2 (271 aa).

Topologically, residues 1 to 249 (MSVVGKRVVD…LGRAVALVRR (249 aa)) are perinuclear space. Residues 250-267 (SWPWISAGIAFLCLGLVW) form a helical membrane-spanning segment. Residues 268–271 (MRPS) lie on the Nuclear side of the membrane.

Belongs to the herpesviridae NEC2 protein family. As to quaternary structure, forms a heterohexameric complex with NEC1. In terms of processing, phosphorylated.

The protein resides in the host nucleus inner membrane. Its function is as follows. Plays an essential role in virion nuclear egress, the first step of virion release from infected cell. Within the host nucleus, NEC1 interacts with the newly formed capsid through the vertexes and directs it to the inner nuclear membrane by associating with NEC2. Induces the budding of the capsid at the inner nuclear membrane as well as its envelopment into the perinuclear space. There, the NEC1/NEC2 complex promotes the fusion of the enveloped capsid with the outer nuclear membrane and the subsequent release of the viral capsid into the cytoplasm where it will reach the secondary budding sites in the host Golgi or trans-Golgi network. The sequence is that of Nuclear egress protein 2 from Homo sapiens (Human).